A 315-amino-acid chain; its full sequence is tRNA uridine(34) hydroxylase (315 aa).

In terms of domain architecture, Rhodanese spans 122 to 223 (SDPDVLVIDT…YLEQIPQPES (102 aa)). The active-site Cysteine persulfide intermediate is Cys-183.

This sequence belongs to the TrhO family.

The enzyme catalyses uridine(34) in tRNA + AH2 + O2 = 5-hydroxyuridine(34) in tRNA + A + H2O. In terms of biological role, catalyzes oxygen-dependent 5-hydroxyuridine (ho5U) modification at position 34 in tRNAs. The protein is tRNA uridine(34) hydroxylase of Caulobacter vibrioides (strain ATCC 19089 / CIP 103742 / CB 15) (Caulobacter crescentus).